We begin with the raw amino-acid sequence, 101 residues long: NADH-quinone oxidoreductase subunit K (101 aa).

The next 3 membrane-spanning stretches (helical) occupy residues 4–24 (LSHYLTVAAILFTLGVLGIFI), 30–50 (IVILMCVELILLAVNINLVAF), and 65–85 (FVLTVAAAEAAIGLAILVVFF).

The protein belongs to the complex I subunit 4L family. As to quaternary structure, NDH-1 is composed of 14 different subunits. Subunits NuoA, H, J, K, L, M, N constitute the membrane sector of the complex.

The protein resides in the cell inner membrane. The catalysed reaction is a quinone + NADH + 5 H(+)(in) = a quinol + NAD(+) + 4 H(+)(out). In terms of biological role, NDH-1 shuttles electrons from NADH, via FMN and iron-sulfur (Fe-S) centers, to quinones in the respiratory chain. The immediate electron acceptor for the enzyme in this species is believed to be ubiquinone. Couples the redox reaction to proton translocation (for every two electrons transferred, four hydrogen ions are translocated across the cytoplasmic membrane), and thus conserves the redox energy in a proton gradient. This chain is NADH-quinone oxidoreductase subunit K, found in Methylobacterium sp. (strain 4-46).